A 399-amino-acid polypeptide reads, in one-letter code: MARRLQDELSAFFFEYDTPRMVLVRNKKVGVIFRLIQLVVLVYVIGWVFVYEKGYQTSSGLISSVSVKLKGLAVTQLQGLGPQVWDVADYVFPAHGDSSFVVMTNFIMTPQQAQGHCAENPEGGICQDDSGCTPGKAERKAQGIRTGNCVPFNGTVKTCEIFGWCPVEVDDKIPSPALLHEAENFTLFIKNSISFPRFKVNRRNLVEEVNGTYMKKCLYHKILHPLCPVFSLGYVVRESGQDFRSLAEKGGVVGITIDWECDLDWHVRHCKPIYQFHGLYGEKNLSPGFNFRFARHFVQNGTNRRHLFKVFGIRFDILVDGKAGKFDIIPTMTTIGSGIGIFGVATVLCDLLLLHILPKRHYYKQKKFKYAEDMGPGEGERDPAATSSTLGLQENMRTS.

Over 1 to 28 (MARRLQDELSAFFFEYDTPRMVLVRNKK) the chain is Cytoplasmic. A helical transmembrane segment spans residues 29-50 (VGVIFRLIQLVVLVYVIGWVFV). Over 51 to 338 (YEKGYQTSSG…IPTMTTIGSG (288 aa)) the chain is Extracellular. Lys-68, Lys-70, and Lys-140 together coordinate CTP. Residue Lys-70 coordinates ATP. 3 disulfide bridges follow: Cys-117–Cys-165, Cys-126–Cys-149, and Cys-132–Cys-159. Asn-153 and Asn-184 each carry an N-linked (GlcNAc...) asparagine glycan. Thr-186 lines the CTP pocket. Residue Thr-186 participates in ATP binding. The N-linked (GlcNAc...) asparagine glycan is linked to Asn-210. 2 disulfide bridges follow: Cys-217–Cys-227 and Cys-261–Cys-270. Residues Ser-286, Asn-290, and Arg-292 each contribute to the ATP site. CTP contacts are provided by Asn-290 and Arg-292. Asn-300 carries an N-linked (GlcNAc...) asparagine glycan. Lys-309 provides a ligand contact to CTP. Lys-309 lines the ATP pocket. A pore-forming motif region spans residues 331–338 (TMTTIGSG). The helical transmembrane segment at 339-358 (IGIFGVATVLCDLLLLHILP) threads the bilayer. Over 359 to 399 (KRHYYKQKKFKYAEDMGPGEGERDPAATSSTLGLQENMRTS) the chain is Cytoplasmic. The segment at 374-399 (MGPGEGERDPAATSSTLGLQENMRTS) is disordered. Residues 385–399 (ATSSTLGLQENMRTS) are compositionally biased toward polar residues. 2 positions are modified to phosphoserine: Ser-387 and Ser-388. Position 389 is a phosphothreonine (Thr-389).

The protein belongs to the P2X receptor family. In terms of assembly, functional P2XRs are organized as homomeric and heteromeric trimers. Forms heterodimer with P2RX2. Forms heterodimer with P2RX4. Forms heterodimer with P2RX5. Expressed in smooth muscle of the bladder and arteries.

It localises to the cell membrane. The enzyme catalyses Ca(2+)(in) = Ca(2+)(out). The catalysed reaction is K(+)(in) = K(+)(out). It carries out the reaction Na(+)(in) = Na(+)(out). Its activity is regulated as follows. Activated by low concentrations of ATP (&lt;1 uM). Undergoes rapid desensitisation. Sensitives to the ATP agonist:alpha/beta-methylene-ATP. Modulated by cholesterol. Its function is as follows. ATP-gated nonselective transmembrane cation channel permeable to potassium, sodium and with relatively high calcium permeability. Furthermore, CTP functions as a weak affinity agonist for P2RX1. Plays a role in male fertility, bladder contraction and platelet aggregation. Specifically, plays an important role in neurogenic contraction of smooth muscle of the vas deferens, and therefore is essential for normal male reproductive function. In addition, contributes to smooth muscle contractions of the urinary bladder. On platelets, contributes to platelet activation and aggregation and thereby, also to thrombosis. On neutrophils, it is involved in chemotaxis and in mitigating the activation of circulating cells. The protein is P2X purinoceptor 1 (P2rx1) of Mus musculus (Mouse).